Reading from the N-terminus, the 77-residue chain is MSCCGGNCGCGSACKCGNGCGGCKMNADLSYTESTTTETIVMGVGSAKAQFEGAEMGAESGGCKCGANCTCDPCTCK.

It belongs to the metallothionein superfamily. Type 15 family.

In terms of biological role, metallothioneins have a high content of cysteine residues that bind various heavy metals. The chain is Metallothionein-like protein 2 (MT1A) from Trifolium repens (Creeping white clover).